Reading from the N-terminus, the 418-residue chain is Glutamyl-tRNA reductase (418 aa).

Residues 49–52 (TCNR), Ser109, 114–116 (EPQ), and Gln120 contribute to the substrate site. Cys50 (nucleophile) is an active-site residue. Residue 189–194 (GAGETI) participates in NADP(+) binding.

The protein belongs to the glutamyl-tRNA reductase family. Homodimer.

It carries out the reaction (S)-4-amino-5-oxopentanoate + tRNA(Glu) + NADP(+) = L-glutamyl-tRNA(Glu) + NADPH + H(+). It participates in porphyrin-containing compound metabolism; protoporphyrin-IX biosynthesis; 5-aminolevulinate from L-glutamyl-tRNA(Glu): step 1/2. Catalyzes the NADPH-dependent reduction of glutamyl-tRNA(Glu) to glutamate 1-semialdehyde (GSA). The protein is Glutamyl-tRNA reductase of Escherichia coli O1:K1 / APEC.